Here is a 268-residue protein sequence, read N- to C-terminus: Interleukin-1 beta (268 aa).

A propeptide spanning residues 1–116 is cleaved from the precursor; sequence MAEVPELASE…TRNNDACVHD (116 aa).

This sequence belongs to the IL-1 family. As to quaternary structure, monomer. In its precursor form, weakly interacts with full-length MEFV; the mature cytokine does not interact at all. Interacts with integrins ITGAV:ITGBV and ITGA5:ITGB1; integrin-binding is required for IL1B signaling. Interacts with cargo receptor TMED10; the interaction is direct and is required for the secretion of IL1B mature form. Interacts with HSP90AB1; the interaction facilitates cargo translocation into the ERGIC. Interacts with HSP90B1; the interaction facilitates cargo translocation into the ERGIC.

The protein localises to the cytoplasm. It is found in the cytosol. The protein resides in the secreted. Its subcellular location is the lysosome. It localises to the extracellular exosome. Functionally, potent pro-inflammatory cytokine. Initially discovered as the major endogenous pyrogen, induces prostaglandin synthesis, neutrophil influx and activation, T-cell activation and cytokine production, B-cell activation and antibody production, and fibroblast proliferation and collagen production. Promotes Th17 differentiation of T-cells. Synergizes with IL12/interleukin-12 to induce IFNG synthesis from T-helper 1 (Th1) cells. Plays a role in angiogenesis by inducing VEGF production synergistically with TNF and IL6. Involved in transduction of inflammation downstream of pyroptosis: its mature form is specifically released in the extracellular milieu by passing through the gasdermin-D (GSDMD) pore. This Macaca fascicularis (Crab-eating macaque) protein is Interleukin-1 beta (IL1B).